The primary structure comprises 32 residues: Hyaluronidase-Pk1a (32 aa).

N-linked (GlcNAc...) asparagine glycosylation is present at Asn-23.

This sequence belongs to the glycosyl hydrolase 56 family. In terms of tissue distribution, expressed by the venom gland.

The protein resides in the secreted. It carries out the reaction Random hydrolysis of (1-&gt;4)-linkages between N-acetyl-beta-D-glucosamine and D-glucuronate residues in hyaluronate.. In terms of biological role, hydrolyzes high molecular weight hyaluronic acid to produce small oligosaccharides. In Phoneutria keyserlingi (Brazilian wandering spider), this protein is Hyaluronidase-Pk1a.